A 215-amino-acid polypeptide reads, in one-letter code: Probable peptidyl-prolyl cis-trans isomerase (215 aa).

Positions 38–197 (DGIYAVMETN…RRGAAAKRFV (160 aa)) constitute a PPIase cyclophilin-type domain.

It belongs to the cyclophilin-type PPIase family.

The enzyme catalyses [protein]-peptidylproline (omega=180) = [protein]-peptidylproline (omega=0). PPIases accelerate the folding of proteins. It catalyzes the cis-trans isomerization of proline imidic peptide bonds in oligopeptides. The protein is Probable peptidyl-prolyl cis-trans isomerase (ppiB) of Treponema pallidum (strain Nichols).